Consider the following 914-residue polypeptide: Scaffold attachment factor B1 (914 aa).

Residues 1–24 (MAETLSGLGDSGAAGAAALSSASS) are compositionally biased toward low complexity. Positions 1 to 33 (MAETLSGLGDSGAAGAAALSSASSETGTRRLSD) are disordered. Ala2 is subject to N-acetylalanine. 2 positions are modified to phosphoserine: Ser24 and Ser55. Positions 31–65 (LSDLRVIDLRAELRKRNVDSSGNKSVLMERLKKAI) constitute an SAP domain. Residues 64 to 117 (AIEDEGGNPDEIEITSEGNKKTSKRSSKGRKPEEEGVEDNGLEENSGDGQEDVE) are disordered. A compositionally biased stretch (acidic residues) spans 67–77 (DEGGNPDEIEI). A Phosphoserine modification is found at Ser79. The span at 98–117 (EGVEDNGLEENSGDGQEDVE) shows a compositional bias: acidic residues. Glycyl lysine isopeptide (Lys-Gly) (interchain with G-Cter in SUMO2) cross-links involve residues Lys172 and Lys186. Phosphothreonine is present on Thr188. Ser195, Ser197, and Ser209 each carry phosphoserine. Residues 221–407 (LGETCKSEPV…EKGRSSCGRN (187 aa)) are disordered. Residues 225–234 (CKSEPVKEES) show a composition bias toward basic and acidic residues. Residue Lys231 forms a Glycyl lysine isopeptide (Lys-Gly) (interchain with G-Cter in SUMO) linkage. Residues 275-286 (SESTAHAQSSKA) show a composition bias toward polar residues. Over residues 293-309 (VKREPAEQPGDGERTDC) the composition is skewed to basic and acidic residues. Lys294 is covalently cross-linked (Glycyl lysine isopeptide (Lys-Gly) (interchain with G-Cter in SUMO)). Residues 319-330 (EQSSAASELAEA) show a composition bias toward low complexity. The segment covering 346–359 (EARDSKEDGRKFDF) has biased composition (basic and acidic residues). Residues 371–383 (ESSTSEGADQKMS) show a composition bias toward polar residues. Residue Lys381 forms a Glycyl lysine isopeptide (Lys-Gly) (interchain with G-Cter in SUMO2) linkage. A phosphoserine mark is found at Ser383 and Ser384. The segment covering 390-401 (DTKRLSKEEKGR) has biased composition (basic and acidic residues). Lys392 participates in a covalent cross-link: Glycyl lysine isopeptide (Lys-Gly) (interchain with G-Cter in SUMO2). One can recognise an RRM domain in the interval 406-484 (RNFWVSGLSS…KMISVEKAKN (79 aa)). Position 415 is a phosphoserine (Ser415). Basic and acidic residues-rich tracts occupy residues 477-551 (ISVE…ERSR) and 559-570 (GTERTVVMDKSK). Disordered regions lie at residues 477-636 (ISVE…QAQW), 670-706 (RERM…QERR), and 748-914 (FDHR…TRRY). Glycyl lysine isopeptide (Lys-Gly) (interchain with G-Cter in SUMO2) cross-links involve residues Lys483, Lys514, Lys543, and Lys570. Residues 528–791 (GDDGSGEKSK…RHGGPERHGR (264 aa)) form an interaction with POLR2A; SFRS1; SFRS9 and SFRS10 region. Lys578 participates in a covalent cross-link: Glycyl lysine isopeptide (Lys-Gly) (interchain with G-Cter in SUMO1); alternate. A Glycyl lysine isopeptide (Lys-Gly) (interchain with G-Cter in SUMO2); alternate cross-link involves residue Lys578. A phosphoserine mark is found at Ser580, Ser582, Ser601, and Ser604. Residues 581-636 (GSKERASKSLDRKSASREKRSVVSFDKVKEPRKSRDSESHRVRERSEREQRMQAQW) are compositionally biased toward basic and acidic residues. A Nuclear localization signal motif is present at residues 599-616 (KRSVVSFDKVKEPRKSRD). The segment at 599 to 914 (KRSVVSFDKV…PSDARFTRRY (316 aa)) is interaction with SAFB2. Lys607 is modified (N6-acetyllysine). A compositionally biased stretch (basic and acidic residues) spans 748 to 795 (FDHRDRGRYPDHSVDRREGSRSMMGEREGQHYPERHGGPERHGRDSRD). Arg810 is modified (omega-N-methylarginine). Composition is skewed to basic and acidic residues over residues 816–831 (PRRD…DDRA) and 840–850 (MMDRDHKRWQG). Lys846 participates in a covalent cross-link: Glycyl lysine isopeptide (Lys-Gly) (interchain with G-Cter in SUMO2). An asymmetric dimethylarginine mark is found at Arg867, Arg873, and Arg883. The span at 891-900 (GMQGGFGGQS) shows a compositional bias: gly residues. The span at 904–914 (RPSDARFTRRY) shows a compositional bias: basic and acidic residues.

Monomer and homodimer. Interacts with KHDRBS3. Interacts with CLK2. Interacts with POLR2A, ASF/SRSF1, SRp30c/SRFS9 and TRA2B/SFRS10. Interacts with SRPK1 and inhibits its activity. Interacts with RBMX. Interacts with FUS. Interacts with ZBED4. Sumoylated by PIAS1 with SUMO1 and SUMO2/3, desumoylated by SENP1. Sumoylation is required for transcriptional repressor activity.

It is found in the nucleus. In terms of biological role, binds to scaffold/matrix attachment region (S/MAR) DNA and forms a molecular assembly point to allow the formation of a 'transcriptosomal' complex (consisting of SR proteins and RNA polymerase II) coupling transcription and RNA processing. Functions as an estrogen receptor corepressor and can also bind to the HSP27 promoter and decrease its transcription. Thereby acts as a negative regulator of cell proliferation. When associated with RBMX, binds to and stimulates transcription from the SREBF1 promoter. The protein is Scaffold attachment factor B1 (SAFB) of Pongo abelii (Sumatran orangutan).